Reading from the N-terminus, the 449-residue chain is Xylose isomerase (449 aa).

Catalysis depends on residues histidine 101 and aspartate 104. Residues glutamate 232, glutamate 268, histidine 271, aspartate 296, aspartate 307, aspartate 309, and aspartate 340 each contribute to the Mg(2+) site.

It belongs to the xylose isomerase family. As to quaternary structure, homotetramer. Mg(2+) serves as cofactor.

The protein localises to the cytoplasm. It catalyses the reaction alpha-D-xylose = alpha-D-xylulofuranose. This Bifidobacterium longum (strain NCC 2705) protein is Xylose isomerase.